Here is a 1097-residue protein sequence, read N- to C-terminus: DNA-directed RNA polymerase subunit beta (1097 aa).

Residues 1070–1097 are disordered; the sequence is LMQDVNPRRNTPSRPTYESLGTSEYEED. The span at 1077–1091 shows a compositional bias: polar residues; sequence RRNTPSRPTYESLGT.

The protein belongs to the RNA polymerase beta chain family. In cyanobacteria the RNAP catalytic core is composed of 2 alpha, 1 beta, 1 beta', 1 gamma and 1 omega subunit. When a sigma factor is associated with the core the holoenzyme is formed, which can initiate transcription.

It catalyses the reaction RNA(n) + a ribonucleoside 5'-triphosphate = RNA(n+1) + diphosphate. DNA-dependent RNA polymerase catalyzes the transcription of DNA into RNA using the four ribonucleoside triphosphates as substrates. This chain is DNA-directed RNA polymerase subunit beta, found in Prochlorococcus marinus (strain MIT 9515).